Reading from the N-terminus, the 648-residue chain is MSHHGGAPKASTWVVASRRSSTVSRAPERRPAEELNRTGPEGYSVGRGGRWRGTSRPPEAVAAGHEELPLCFALKSHFVGAVIGRGGSKIKNIQSTTNTTIQIIQEQPESLVKIFGSKAMQTKAKAVIDNFVKKLEENYNSECGIDTAFQPSVGKDGSTDNNVVAGDRPLIDWDQIREEGLKWQKTKWADLPPIKKNFYKESTATSAMSKVEADSWRKENFNITWDDLKDGEKRPIPNPTCTFDDAFQCYPEVMENIKKAGFQKPTPIQSQAWPIVLQGIDLIGVAQTGTGKTLCYLMPGFIHLVLQPSLKGQRNRPGMLVLTPTRELALQVEGECCKYSYKGLRSVCVYGGGNRDEQIEELKKGVDIIIATPGRLNDLQMSNFVNLKNITYLVLDEADKMLDMGFEPQIMKILLDVRPDRQTVMTSATWPHSVHRLAQSYLKEPMIVYVGTLDLVAVSSVKQNIIVTTEEEKWSHMQTFLQSMSSTDKVIVFVSRKAVADHLSSDLILGNISVESLHGDREQRDREKALENFKTGKVRILIATDLASRGLDVHDVTHVYNFDFPRNIEEYVHRIGRTGRAGRTGVSITTLTRNDWRVASELINILERANQSIPEELVSMAERFKAHQQKREMERKMERPQGRPKKFH.

The segment at 1-60 is disordered; the sequence is MSHHGGAPKASTWVVASRRSSTVSRAPERRPAEELNRTGPEGYSVGRGGRWRGTSRPPEA. Low complexity predominate over residues 10 to 25; the sequence is ASTWVVASRRSSTVSR. The span at 26–36 shows a compositional bias: basic and acidic residues; it reads APERRPAEELN. The KH domain occupies 67–128; sequence ELPLCFALKS…AMQTKAKAVI (62 aa). The Q motif signature appears at 242-270; sequence TFDDAFQCYPEVMENIKKAGFQKPTPIQS. Residues 273-448 form the Helicase ATP-binding domain; the sequence is WPIVLQGIDL…QSYLKEPMIV (176 aa). Residue 286–293 participates in ATP binding; it reads AQTGTGKT. A DEAD box motif is present at residues 396–399; sequence DEAD. One can recognise a Helicase C-terminal domain in the interval 460–621; that stretch reads SVKQNIIVTT…SIPEELVSMA (162 aa). Over residues 628 to 641 the composition is skewed to basic and acidic residues; that stretch reads QQKREMERKMERPQ. Positions 628-648 are disordered; sequence QQKREMERKMERPQGRPKKFH.

It belongs to the DEAD box helicase family. As to expression, expressed in testis. Expressed in many tumors of various histological types at a level that is 100-fold higher than the level observed in normal tissues except testis.

It carries out the reaction ATP + H2O = ADP + phosphate + H(+). The sequence is that of Probable ATP-dependent RNA helicase DDX43 (DDX43) from Homo sapiens (Human).